A 390-amino-acid chain; its full sequence is Transforming growth factor beta-1 proprotein (390 aa).

The N-terminal stretch at Met-1–Gly-29 is a signal peptide. Residues Leu-30 to Pro-74 are straightjacket domain. Positions Glu-75–Leu-271 are arm domain. Residues Asn-82, Asn-136, and Asn-176 are each glycosylated (N-linked (GlcNAc...) asparagine). Residues Asp-226 to Gly-252 form a bowtie tail region. The short motif at Arg-244–Asp-246 is the Cell attachment site element. Intrachain disulfides connect Cys-285–Cys-294, Cys-293–Cys-356, Cys-322–Cys-387, and Cys-326–Cys-389.

This sequence belongs to the TGF-beta family. Homodimer; disulfide-linked. Interacts with the serine proteases, HTRA1 and HTRA3: the interaction with either inhibits TGFB1-mediated signaling and the HTRA protease activity is required for this inhibition. May interact with THSD4; this interaction may lead to sequestration by FBN1 microfibril assembly and attenuation of TGFB signaling. Interacts with CD109, DPT and ASPN. Interacts with EFEMP2. Interacts with TSKU; the interaction contributes to regulation of the hair cycle. Interacts with TGFBR3. As to quaternary structure, homodimer; disulfide-linked. Interacts with transforming growth factor beta-1 (TGF-beta-1) chain; interaction is non-covalent and maintains TGF-beta-1 in a latent state; each latency-associated peptide (LAP) monomer interacts with TGF-beta-1 in the other monomer. Interacts with LTBP1; leading to regulation of TGF-beta-1 activation. Interacts with LRRC32/GARP; leading to regulation of TGF-beta-1 activation on the surface of activated regulatory T-cells (Tregs). Interacts with LRRC33/NRROS; leading to regulation of TGF-beta-1 activation in macrophages and microglia. Interacts (via cell attachment site) with integrins ITGAV and ITGB6 (ITGAV:ITGB6), leading to release of the active TGF-beta-1. Latency-associated peptide: Interacts with NREP; the interaction results in a decrease in TGFB1 autoinduction. Interacts with HSP90AB1; inhibits latent TGFB1 activation. In terms of assembly, homodimer; disulfide-linked. Interacts with TGF-beta receptors (TGFBR1 and TGFBR2), leading to signal transduction. Post-translationally, transforming growth factor beta-1 proprotein: The precursor proprotein is cleaved in the Golgi apparatus by FURIN to form Transforming growth factor beta-1 (TGF-beta-1) and Latency-associated peptide (LAP) chains, which remain non-covalently linked, rendering TGF-beta-1 inactive. N-glycosylated. Deglycosylation leads to activation of Transforming growth factor beta-1 (TGF-beta-1); mechanisms triggering deglycosylation-driven activation of TGF-beta-1 are however unclear.

It is found in the secreted. It localises to the extracellular space. The protein localises to the extracellular matrix. Its function is as follows. Transforming growth factor beta-1 proprotein: Precursor of the Latency-associated peptide (LAP) and Transforming growth factor beta-1 (TGF-beta-1) chains, which constitute the regulatory and active subunit of TGF-beta-1, respectively. In terms of biological role, required to maintain the Transforming growth factor beta-1 (TGF-beta-1) chain in a latent state during storage in extracellular matrix. Associates non-covalently with TGF-beta-1 and regulates its activation via interaction with 'milieu molecules', such as LTBP1, LRRC32/GARP and LRRC33/NRROS, that control activation of TGF-beta-1. Interaction with LRRC33/NRROS regulates activation of TGF-beta-1 in macrophages and microglia. Interaction with LRRC32/GARP controls activation of TGF-beta-1 on the surface of activated regulatory T-cells (Tregs). Interaction with integrins (ITGAV:ITGB6 or ITGAV:ITGB8) results in distortion of the Latency-associated peptide chain and subsequent release of the active TGF-beta-1. Functionally, multifunctional protein that regulates the growth and differentiation of various cell types and is involved in various processes, such as normal development, immune function, microglia function and responses to neurodegeneration. Activation into mature form follows different steps: following cleavage of the proprotein in the Golgi apparatus, Latency-associated peptide (LAP) and Transforming growth factor beta-1 (TGF-beta-1) chains remain non-covalently linked rendering TGF-beta-1 inactive during storage in extracellular matrix. At the same time, LAP chain interacts with 'milieu molecules', such as LTBP1, LRRC32/GARP and LRRC33/NRROS that control activation of TGF-beta-1 and maintain it in a latent state during storage in extracellular milieus. TGF-beta-1 is released from LAP by integrins (ITGAV:ITGB6 or ITGAV:ITGB8): integrin-binding to LAP stabilizes an alternative conformation of the LAP bowtie tail and results in distortion of the LAP chain and subsequent release of the active TGF-beta-1. Once activated following release of LAP, TGF-beta-1 acts by binding to TGF-beta receptors (TGFBR1 and TGFBR2), which transduce signal. While expressed by many cells types, TGF-beta-1 only has a very localized range of action within cell environment thanks to fine regulation of its activation by Latency-associated peptide chain (LAP) and 'milieu molecules'. Plays an important role in bone remodeling: acts as a potent stimulator of osteoblastic bone formation, causing chemotaxis, proliferation and differentiation in committed osteoblasts. Can promote either T-helper 17 cells (Th17) or regulatory T-cells (Treg) lineage differentiation in a concentration-dependent manner. At high concentrations, leads to FOXP3-mediated suppression of RORC and down-regulation of IL-17 expression, favoring Treg cell development. At low concentrations in concert with IL-6 and IL-21, leads to expression of the IL-17 and IL-23 receptors, favoring differentiation to Th17 cells. Stimulates sustained production of collagen through the activation of CREB3L1 by regulated intramembrane proteolysis (RIP). Mediates SMAD2/3 activation by inducing its phosphorylation and subsequent translocation to the nucleus. Positively regulates odontoblastic differentiation in dental papilla cells, via promotion of IPO7-mediated translocation of phosphorylated SMAD2 to the nucleus and subsequent transcription of target genes. Can induce epithelial-to-mesenchymal transition (EMT) and cell migration in various cell types. This is Transforming growth factor beta-1 proprotein (TGFB1) from Equus caballus (Horse).